Reading from the N-terminus, the 217-residue chain is 3,4-dihydroxy-2-butanone 4-phosphate synthase (217 aa).

Residues 37–38, aspartate 42, 150–154, and glutamate 174 contribute to the D-ribulose 5-phosphate site; these read RE and RRGHT. Residue glutamate 38 participates in Mg(2+) binding. Histidine 153 is a binding site for Mg(2+).

This sequence belongs to the DHBP synthase family. Homodimer. Requires Mg(2+) as cofactor. It depends on Mn(2+) as a cofactor.

The catalysed reaction is D-ribulose 5-phosphate = (2S)-2-hydroxy-3-oxobutyl phosphate + formate + H(+). The protein operates within cofactor biosynthesis; riboflavin biosynthesis; 2-hydroxy-3-oxobutyl phosphate from D-ribulose 5-phosphate: step 1/1. In terms of biological role, catalyzes the conversion of D-ribulose 5-phosphate to formate and 3,4-dihydroxy-2-butanone 4-phosphate. The polypeptide is 3,4-dihydroxy-2-butanone 4-phosphate synthase (Shewanella putrefaciens (strain CN-32 / ATCC BAA-453)).